The sequence spans 115 residues: Large ribosomal subunit protein eL30 (115 aa).

2 positions are modified to phosphoserine: S10 and S16. K26 carries the post-translational modification N6-acetyllysine; alternate. K26 is covalently cross-linked (Glycyl lysine isopeptide (Lys-Gly) (interchain with G-Cter in SUMO2); alternate).

Belongs to the eukaryotic ribosomal protein eL30 family. In terms of assembly, component of the large ribosomal subunit.

It is found in the cytoplasm. Component of the large ribosomal subunit. The ribosome is a large ribonucleoprotein complex responsible for the synthesis of proteins in the cell. This chain is Large ribosomal subunit protein eL30 (RPL30), found in Oryctolagus cuniculus (Rabbit).